A 207-amino-acid polypeptide reads, in one-letter code: Succinyl-CoA:3-ketoacid coenzyme A transferase subunit B (207 aa).

The active site involves Glu43.

It belongs to the 3-oxoacid CoA-transferase subunit B family. Heterodimer of a subunit A and a subunit B.

The enzyme catalyses a 3-oxo acid + succinyl-CoA = a 3-oxoacyl-CoA + succinate. This Helicobacter pylori (strain J99 / ATCC 700824) (Campylobacter pylori J99) protein is Succinyl-CoA:3-ketoacid coenzyme A transferase subunit B (scoB).